A 330-amino-acid chain; its full sequence is Trans-1,2-dihydrobenzene-1,2-diol dehydrogenase (330 aa).

This sequence belongs to the Gfo/Idh/MocA family. As to quaternary structure, homodimer.

It catalyses the reaction (1R,2R)-1,2-dihydrobenzene-1,2-diol + NADP(+) = catechol + NADPH + H(+). It carries out the reaction D-xylose + NADP(+) = D-xylono-1,5-lactone + NADPH + H(+). The chain is Trans-1,2-dihydrobenzene-1,2-diol dehydrogenase (dhdh) from Xenopus tropicalis (Western clawed frog).